We begin with the raw amino-acid sequence, 232 residues long: Translation initiation factor IF-3 (232 aa).

Disordered regions lie at residues 1–21 (MAIQ…RTNR) and 184–232 (LQSQ…AAQR). Positions 193–208 (AAAAAAPAAAPAAGAP) are enriched in low complexity. Over residues 209-222 (APTPAPAPAAPAPA) the composition is skewed to pro residues. A compositionally biased stretch (low complexity) spans 223–232 (PAAADPAAQR).

This sequence belongs to the IF-3 family. Monomer.

It is found in the cytoplasm. In terms of biological role, IF-3 binds to the 30S ribosomal subunit and shifts the equilibrium between 70S ribosomes and their 50S and 30S subunits in favor of the free subunits, thus enhancing the availability of 30S subunits on which protein synthesis initiation begins. The polypeptide is Translation initiation factor IF-3 (Anaeromyxobacter sp. (strain K)).